We begin with the raw amino-acid sequence, 368 residues long: MKTTAAVLFEAGKPFELMELDLDGPGPGEVLVKYTAAGLCHSDLHLTDGDLPPRFPIVGGHEGSGVIEEVGAGVTRVKPGDHVVCSFIPNCGTCRYCCTGRQNLCDMGATILEGCMPDGSFRFHSQGTDFGAMCMLGTFAERATVSQHSVVKVDDWLPLETAVLVGCGVPSGWGTAVNAGNLRAGDTAVIYGVGGLGINAVQGATAAGCKYVVVVDPVAFKRETALKFGATHAFADAASAAAKVDELTWGQGADAALILVGTVDDEVVSAATAVIGKGGTVVITGLADPAKLTVHVSGTDLTLHEKTIKGSLFGSCNPQYDIVRLLRLYDAGQLMLDELVTTTYNLEQVNQGYQDLRDGKNIRGVIVH.

Residues Cys40, His61, Cys91, Cys94, Cys97, Cys105, and Cys167 each contribute to the Zn(2+) site.

Belongs to the zinc-containing alcohol dehydrogenase family. The cofactor is Zn(2+).

It carries out the reaction a primary alcohol + NAD(+) = an aldehyde + NADH + H(+). The enzyme catalyses a secondary alcohol + NAD(+) = a ketone + NADH + H(+). Required for maintaining the appropriate mycolic acid composition and permeability of the envelope on its exposure to acidic pH. This is Putative alcohol dehydrogenase D (adhD) from Mycobacterium tuberculosis (strain CDC 1551 / Oshkosh).